A 193-amino-acid polypeptide reads, in one-letter code: Cytidylate kinase (193 aa).

12 to 20 (GLAGSGTTT) is an ATP binding site.

It belongs to the cytidylate kinase family. Type 2 subfamily.

The protein resides in the cytoplasm. It carries out the reaction CMP + ATP = CDP + ADP. The enzyme catalyses dCMP + ATP = dCDP + ADP. The protein is Cytidylate kinase of Thermococcus kodakarensis (strain ATCC BAA-918 / JCM 12380 / KOD1) (Pyrococcus kodakaraensis (strain KOD1)).